A 117-amino-acid chain; its full sequence is Large ribosomal subunit protein bL19 (117 aa).

The protein belongs to the bacterial ribosomal protein bL19 family.

Its function is as follows. This protein is located at the 30S-50S ribosomal subunit interface and may play a role in the structure and function of the aminoacyl-tRNA binding site. The chain is Large ribosomal subunit protein bL19 from Shewanella pealeana (strain ATCC 700345 / ANG-SQ1).